A 426-amino-acid polypeptide reads, in one-letter code: Dihydroorotase (426 aa).

2 residues coordinate Zn(2+): histidine 59 and histidine 61. Residues 61 to 63 (HLR) and asparagine 93 each bind substrate. Residues aspartate 151, histidine 178, and histidine 232 each coordinate Zn(2+). Position 279 (asparagine 279) interacts with substrate. Residue aspartate 306 participates in Zn(2+) binding. The active site involves aspartate 306. Residues histidine 310 and 324-325 (FG) contribute to the substrate site.

This sequence belongs to the metallo-dependent hydrolases superfamily. DHOase family. Class I DHOase subfamily. Zn(2+) is required as a cofactor.

The catalysed reaction is (S)-dihydroorotate + H2O = N-carbamoyl-L-aspartate + H(+). The protein operates within pyrimidine metabolism; UMP biosynthesis via de novo pathway; (S)-dihydroorotate from bicarbonate: step 3/3. In terms of biological role, catalyzes the reversible cyclization of carbamoyl aspartate to dihydroorotate. The protein is Dihydroorotase of Brevibacillus brevis (strain 47 / JCM 6285 / NBRC 100599).